Reading from the N-terminus, the 431-residue chain is UPF0597 protein TDE_2144 (431 aa).

This sequence belongs to the UPF0597 family.

The chain is UPF0597 protein TDE_2144 from Treponema denticola (strain ATCC 35405 / DSM 14222 / CIP 103919 / JCM 8153 / KCTC 15104).